A 135-amino-acid polypeptide reads, in one-letter code: Small ribosomal subunit protein eS6 (135 aa).

This sequence belongs to the eukaryotic ribosomal protein eS6 family.

The polypeptide is Small ribosomal subunit protein eS6 (Methanospirillum hungatei JF-1 (strain ATCC 27890 / DSM 864 / NBRC 100397 / JF-1)).